The following is a 161-amino-acid chain: Phosphopantetheine adenylyltransferase (161 aa).

Threonine 9 serves as a coordination point for substrate. ATP-binding positions include 9–10 and histidine 17; that span reads TF. Residues lysine 41, leucine 73, and arginine 87 each coordinate substrate. ATP-binding positions include 88–90, glutamate 98, and 123–129; these read GLR and YQFISGT.

It belongs to the bacterial CoaD family. In terms of assembly, homohexamer. The cofactor is Mg(2+).

Its subcellular location is the cytoplasm. It catalyses the reaction (R)-4'-phosphopantetheine + ATP + H(+) = 3'-dephospho-CoA + diphosphate. Its pathway is cofactor biosynthesis; coenzyme A biosynthesis; CoA from (R)-pantothenate: step 4/5. Its function is as follows. Reversibly transfers an adenylyl group from ATP to 4'-phosphopantetheine, yielding dephospho-CoA (dPCoA) and pyrophosphate. The chain is Phosphopantetheine adenylyltransferase from Cupriavidus taiwanensis (strain DSM 17343 / BCRC 17206 / CCUG 44338 / CIP 107171 / LMG 19424 / R1) (Ralstonia taiwanensis (strain LMG 19424)).